We begin with the raw amino-acid sequence, 417 residues long: Sterile alpha motif domain-containing protein 14 (417 aa).

Disordered stretches follow at residues 37 to 299 (LLAK…WQEA) and 388 to 417 (AAAE…AKKS). The segment covering 40–49 (KGRRHRPSRS) has biased composition (basic residues). Phosphoserine is present on residues Ser-84 and Ser-108. A compositionally biased stretch (low complexity) spans 135-153 (AAASCSPPRSAPSSDSSPS). Positions 160–173 (RAEPHSEDDSRDAS) are enriched in basic and acidic residues. Ser-173 and Ser-179 each carry phosphoserine. Low complexity-rich tracts occupy residues 244 to 260 (SGKG…PTCS) and 276 to 295 (STLS…PSGP). Ser-279 is modified (phosphoserine). Residue Thr-283 is modified to Phosphothreonine. The 64-residue stretch at 326-389 (WTSQQVGQWL…KRKLKEMAAA (64 aa)) folds into the SAM domain. A coiled-coil region spans residues 377-417 (ALVKRKLKEMAAAAEKERKAQEKAARQREKLRRREQEAKKS). Over residues 390-417 (AEKERKAQEKAARQREKLRRREQEAKKS) the composition is skewed to basic and acidic residues.

The chain is Sterile alpha motif domain-containing protein 14 (SAMD14) from Homo sapiens (Human).